We begin with the raw amino-acid sequence, 558 residues long: Armadillo repeat-containing X-linked protein 5 (558 aa).

2 stretches are compositionally biased toward basic and acidic residues: residues M1–A14 and K139–A156. Disordered regions lie at residues M1–T34 and K139–S163. ARM repeat units lie at residues C300–P339, V422–K461, H463–F503, and S520–L558.

The protein belongs to the eutherian X-chromosome-specific Armcx family.

The chain is Armadillo repeat-containing X-linked protein 5 (ARMCX5) from Pongo abelii (Sumatran orangutan).